The chain runs to 142 residues: 3-hydroxyacyl-[acyl-carrier-protein] dehydratase FabZ (142 aa).

Residue His-48 is part of the active site.

It belongs to the thioester dehydratase family. FabZ subfamily.

The protein resides in the cytoplasm. It catalyses the reaction a (3R)-hydroxyacyl-[ACP] = a (2E)-enoyl-[ACP] + H2O. Its function is as follows. Involved in unsaturated fatty acids biosynthesis. Catalyzes the dehydration of short chain beta-hydroxyacyl-ACPs and long chain saturated and unsaturated beta-hydroxyacyl-ACPs. This chain is 3-hydroxyacyl-[acyl-carrier-protein] dehydratase FabZ, found in Clostridioides difficile (strain 630) (Peptoclostridium difficile).